We begin with the raw amino-acid sequence, 558 residues long: MHCFPCFSSPKNKKSSTTNETNDNNEPKPDDRRRAEETEEIEQSEGTSLKIFTFRELATATKNFRQECLLGEGGFGRVYKGTLKSTGQVVAVKQLDKHGLHGNKEFQAEVLSLGQLDHPNLVKLIGYCADGDQRLLVYDYISGGSLQDHLHEPKADSDPMDWTTRMQIAYAAAQGLDYLHDKANPPVIYRDLKASNILLDDDFSPKLSDFGLHKLGPGTGDKMMALSSRVMGTYGYSAPEYTRGGNLTLKSDVYSFGVVLLELITGRRALDTTRPNDEQNLVSWAQPIFRDPKRYPDMADPVLENKFSERGLNQAVAIASMCVQEEASARPLISDVMVALSFLSMPTEDGIPTTVPILSFKDKSMSIALSRHDSNLVSPPPELATEDDKSSTSSGEESSLESEKESVSKNEYKKKHEEEDSSMESDDESDSNSEHEKDQPPKPIDEKNQAQSLKIKYRYSWEDIDVNDERLSSKSSQKSNDESTSSRYDSDRDQDEKGKEEEEEEEAEEKHTHIEHIDSSKTDDDQSVYFDNDDDSGDDNGGSLHRIKSDVAIDSIKE.

The tract at residues 1–45 (MHCFPCFSSPKNKKSSTTNETNDNNEPKPDDRRRAEETEEIEQSE) is disordered. Residues 15-24 (SSTTNETNDN) are compositionally biased toward low complexity. Basic and acidic residues predominate over residues 25–36 (NEPKPDDRRRAE). Threonine 53 carries the post-translational modification Phosphothreonine. One can recognise a Protein kinase domain in the interval 64 to 343 (FRQECLLGEG…SDVMVALSFL (280 aa)). Residues 70 to 78 (LGEGGFGRV) and lysine 93 each bind ATP. Tyrosine 138 carries the post-translational modification Phosphotyrosine. The active-site Proton acceptor is the aspartate 191. 2 positions are modified to phosphoserine: serine 195 and serine 227. Threonine 233 is modified (phosphothreonine). Tyrosine 241 is subject to Phosphotyrosine. Positions 372 to 558 (HDSNLVSPPP…SDVAIDSIKE (187 aa)) are disordered. Residues 401-418 (ESEKESVSKNEYKKKHEE) show a composition bias toward basic and acidic residues. A compositionally biased stretch (acidic residues) spans 419-431 (EDSSMESDDESDS). Basic and acidic residues predominate over residues 432–448 (NSEHEKDQPPKPIDEKN). Over residues 473 to 486 (SKSSQKSNDESTSS) the composition is skewed to low complexity. Composition is skewed to basic and acidic residues over residues 488-500 (YDSD…KGKE), 508-524 (EEKH…KTDD), and 547-558 (IKSDVAIDSIKE).

The protein belongs to the protein kinase superfamily. Ser/Thr protein kinase family. In terms of assembly, interacts with PRK6. Post-translationally, palmitoylated. In terms of tissue distribution, expressed in mature pollen and in germinating pollen tubes.

It is found in the cell membrane. Functionally, involved in pollen tube guidance into micropyle. Participates in perception of the ovule-secreted peptide signal LURE1. The polypeptide is Receptor-like kinase LIP2 (Arabidopsis thaliana (Mouse-ear cress)).